Consider the following 698-residue polypeptide: Polyribonucleotide nucleotidyltransferase (698 aa).

Mg(2+) contacts are provided by aspartate 490 and aspartate 496. Positions 557 to 616 (PKVVTMTIKPDKIRDVIGPGGKKINEIIDETGVKLDIEQDGTIFIGAVDQAMINRAREII) constitute a KH domain. The region spanning 626 to 694 (GQTYQATVKR…KQGRVNASHR (69 aa)) is the S1 motif domain.

It belongs to the polyribonucleotide nucleotidyltransferase family. Mg(2+) is required as a cofactor.

It is found in the cytoplasm. The catalysed reaction is RNA(n+1) + phosphate = RNA(n) + a ribonucleoside 5'-diphosphate. In terms of biological role, involved in mRNA degradation. Catalyzes the phosphorolysis of single-stranded polyribonucleotides processively in the 3'- to 5'-direction. This Staphylococcus aureus (strain MRSA252) protein is Polyribonucleotide nucleotidyltransferase.